Consider the following 176-residue polypeptide: Peptide deformylase (176 aa).

Residues Cys100 and His142 each coordinate Fe cation. Glu143 is an active-site residue. His146 is a Fe cation binding site.

The protein belongs to the polypeptide deformylase family. The cofactor is Fe(2+).

It catalyses the reaction N-terminal N-formyl-L-methionyl-[peptide] + H2O = N-terminal L-methionyl-[peptide] + formate. In terms of biological role, removes the formyl group from the N-terminal Met of newly synthesized proteins. Requires at least a dipeptide for an efficient rate of reaction. N-terminal L-methionine is a prerequisite for activity but the enzyme has broad specificity at other positions. This Elusimicrobium minutum (strain Pei191) protein is Peptide deformylase.